Here is a 271-residue protein sequence, read N- to C-terminus: Catechol O-methyltransferase (271 aa).

The Cytoplasmic segment spans residues 1-6; sequence MPEAPP. A helical; Signal-anchor for type II membrane protein membrane pass occupies residues 7 to 26; the sequence is LLLAAVLLGLVLLVVLLLLL. Residues 27–271 are Extracellular-facing; that stretch reads RHWGWGLCLI…YKGPGSEAGP (245 aa). Residues V92, E114, S122, E140, I141, 167–170, S169, and D191 each bind S-adenosyl-L-methionine; that span reads GASQ. D191 is a binding site for Mg(2+). A substrate-binding site is contributed by K194. Positions 219 and 220 each coordinate Mg(2+). 2 residues coordinate substrate: N220 and E249. Phosphoserine is present on S267.

Belongs to the class I-like SAM-binding methyltransferase superfamily. Cation-dependent O-methyltransferase family. It depends on Mg(2+) as a cofactor. Post-translationally, the N-terminus is blocked. As to expression, brain, liver, placenta, lymphocytes and erythrocytes.

It is found in the cytoplasm. The protein localises to the cell membrane. It carries out the reaction a catechol + S-adenosyl-L-methionine = a guaiacol + S-adenosyl-L-homocysteine + H(+). The catalysed reaction is 2-hydroxyestrone + S-adenosyl-L-methionine = 2-hydroxy-3-methoxy-estrone + S-adenosyl-L-homocysteine + H(+). The enzyme catalyses 4-hydroxyestrone + S-adenosyl-L-methionine = 4-methoxyestrone + S-adenosyl-L-homocysteine + H(+). It catalyses the reaction 2-hydroxyestrone + S-adenosyl-L-methionine = 2-methoxyestrone + S-adenosyl-L-homocysteine + H(+). It carries out the reaction 4-hydroxy-17beta-estradiol + S-adenosyl-L-methionine = 4-methoxy-17beta-estradiol + S-adenosyl-L-homocysteine + H(+). The catalysed reaction is 2-hydroxy-17beta-estradiol + S-adenosyl-L-methionine = 2-hydroxy-3-methoxy-17beta-estradiol + S-adenosyl-L-homocysteine + H(+). The enzyme catalyses 2-hydroxy-17beta-estradiol + S-adenosyl-L-methionine = 2-methoxy-17beta-estradiol + S-adenosyl-L-homocysteine + H(+). Catalyzes the O-methylation, and thereby the inactivation, of catecholamine neurotransmitters and catechol hormones. Also shortens the biological half-lives of certain neuroactive drugs, like L-DOPA, alpha-methyl DOPA and isoproterenol. This chain is Catechol O-methyltransferase, found in Homo sapiens (Human).